The following is a 405-amino-acid chain: Amino acid transporter AVT1I (405 aa).

11 helical membrane passes run C22–A42, W46–I66, I93–L113, F140–L160, L169–F189, I201–L221, V234–Y254, V278–T298, L318–F338, S343–L363, and I377–A397.

Belongs to the amino acid/polyamine transporter 2 family. Amino acid/auxin permease (AAAP) (TC 2.A.18.5) subfamily.

The protein localises to the membrane. The sequence is that of Amino acid transporter AVT1I from Arabidopsis thaliana (Mouse-ear cress).